The sequence spans 137 residues: Large ribosomal subunit protein eL28 (137 aa).

N-acetylserine is present on Ser2. Glycyl lysine isopeptide (Lys-Gly) (interchain with G-Cter in SUMO2) cross-links involve residues Lys58 and Lys65. Ser115 carries the phosphoserine modification.

Belongs to the eukaryotic ribosomal protein eL28 family. As to quaternary structure, component of the large ribosomal subunit.

It localises to the cytoplasm. Functionally, component of the large ribosomal subunit. The ribosome is a large ribonucleoprotein complex responsible for the synthesis of proteins in the cell. This chain is Large ribosomal subunit protein eL28 (RPL28), found in Homo sapiens (Human).